We begin with the raw amino-acid sequence, 134 residues long: Fluoride-specific ion channel FluC 2 (134 aa).

The next 4 helical transmembrane spans lie at Ile8–Trp28, Ile40–Val60, Leu69–Leu89, and Leu99–Leu119. Residues Gly75 and Thr78 each contribute to the Na(+) site.

Belongs to the fluoride channel Fluc/FEX (TC 1.A.43) family.

The protein localises to the cell membrane. It carries out the reaction fluoride(in) = fluoride(out). With respect to regulation, na(+) is not transported, but it plays an essential structural role and its presence is essential for fluoride channel function. Fluoride-specific ion channel. Important for reducing fluoride concentration in the cell, thus reducing its toxicity. This Halalkalibacterium halodurans (strain ATCC BAA-125 / DSM 18197 / FERM 7344 / JCM 9153 / C-125) (Bacillus halodurans) protein is Fluoride-specific ion channel FluC 2.